Reading from the N-terminus, the 372-residue chain is tRNA-specific 2-thiouridylase MnmA (372 aa).

ATP is bound by residues 9–16 and M35; that span reads GMSGGVDS. Residues 95–97 are interaction with target base in tRNA; sequence NPD. C100 functions as the Nucleophile in the catalytic mechanism. C100 and C201 are oxidised to a cystine. Residue G124 participates in ATP binding. The interval 151 to 153 is interaction with tRNA; the sequence is KDQ. C201 functions as the Cysteine persulfide intermediate in the catalytic mechanism. The interaction with tRNA stretch occupies residues 317-318; that stretch reads RY.

This sequence belongs to the MnmA/TRMU family.

The protein resides in the cytoplasm. The catalysed reaction is S-sulfanyl-L-cysteinyl-[protein] + uridine(34) in tRNA + AH2 + ATP = 2-thiouridine(34) in tRNA + L-cysteinyl-[protein] + A + AMP + diphosphate + H(+). Functionally, catalyzes the 2-thiolation of uridine at the wobble position (U34) of tRNA, leading to the formation of s(2)U34. The chain is tRNA-specific 2-thiouridylase MnmA from Janthinobacterium sp. (strain Marseille) (Minibacterium massiliensis).